A 295-amino-acid chain; its full sequence is Farnesyl diphosphate synthase (295 aa).

Isopentenyl diphosphate-binding residues include Lys46, Arg49, and His78. 2 residues coordinate Mg(2+): Asp85 and Asp91. Position 96 (Arg96) interacts with (2E)-geranyl diphosphate. Isopentenyl diphosphate is bound at residue Arg97. Positions 180, 181, 220, and 237 each coordinate (2E)-geranyl diphosphate.

It belongs to the FPP/GGPP synthase family. Mg(2+) is required as a cofactor.

It is found in the cytoplasm. The enzyme catalyses isopentenyl diphosphate + (2E)-geranyl diphosphate = (2E,6E)-farnesyl diphosphate + diphosphate. In Haemophilus influenzae (strain ATCC 51907 / DSM 11121 / KW20 / Rd), this protein is Farnesyl diphosphate synthase (ispA).